We begin with the raw amino-acid sequence, 293 residues long: 4-hydroxy-tetrahydrodipicolinate synthase (293 aa).

Thr-47 serves as a coordination point for pyruvate. Tyr-135 (proton donor/acceptor) is an active-site residue. Residue Lys-163 is the Schiff-base intermediate with substrate of the active site. Residue Ile-204 participates in pyruvate binding.

This sequence belongs to the DapA family. Homotetramer; dimer of dimers.

The protein resides in the cytoplasm. The catalysed reaction is L-aspartate 4-semialdehyde + pyruvate = (2S,4S)-4-hydroxy-2,3,4,5-tetrahydrodipicolinate + H2O + H(+). It functions in the pathway amino-acid biosynthesis; L-lysine biosynthesis via DAP pathway; (S)-tetrahydrodipicolinate from L-aspartate: step 3/4. In terms of biological role, catalyzes the condensation of (S)-aspartate-beta-semialdehyde [(S)-ASA] and pyruvate to 4-hydroxy-tetrahydrodipicolinate (HTPA). In Brachyspira hyodysenteriae (strain ATCC 49526 / WA1), this protein is 4-hydroxy-tetrahydrodipicolinate synthase.